The primary structure comprises 108 residues: UPF0145 protein Npun_F4817 (108 aa).

Belongs to the UPF0145 family.

In Nostoc punctiforme (strain ATCC 29133 / PCC 73102), this protein is UPF0145 protein Npun_F4817.